Here is a 177-residue protein sequence, read N- to C-terminus: PBAN-type neuropeptides (177 aa).

The N-terminal stretch at 1–23 (MIVTGNPVCAIALLLCLVFRASG) is a signal peptide. Residues 24–54 (EYELEMSSGGSNDGRSPSNDFGSCTDGKCTK) constitute a propeptide that is removed on maturation. A disordered region spans residues 28–73 (EMSSGGSNDGRSPSNDFGSCTDGKCTKRTTTTQESGISSGMWFGPR). The segment covering 31–45 (SGGSNDGRSPSNDFG) has biased composition (polar residues). Low complexity predominate over residues 47-59 (CTDGKCTKRTTTT). Leu-74 carries the post-translational modification Leucine amide. Positions 78-113 (HKSNEKQQINPEIEMLVNALDQPGMRWTVITIPANE) are excised as a propeptide. Residues Leu-124, Leu-154, and Leu-166 each carry the leucine amide modification. A propeptide spanning residues 169–177 (QSRSVSRKI) is cleaved from the precursor.

Belongs to the pyrokinin family. As to expression, pyrokinins (PK) 1 to 4 are expressed in the retrocerebral complex. PK 1 is expressed in central brain, anntennal lobes and abominal ganglia. PK 2 is expressed in optical lobes and in gnathal, thoracic and abdominal ganglia. PK 3 is expressed in optical lobes and in thoracic and abdominal ganglia (at protein level).

The protein resides in the secreted. Pyrokinins mediate visceral muscle contractile activity (myotropic activity). This is PBAN-type neuropeptides from Camponotus floridanus (Florida carpenter ant).